Reading from the N-terminus, the 291-residue chain is DNA N6-methyl adenine demethylase (291 aa).

One can recognise a Fe2OG dioxygenase domain in the interval 85 to 256; it reads GLTLIHNFLS…RGRRIALTMR (172 aa). A 2-oxoglutarate-binding site is contributed by 171 to 173; that stretch reads LEY. Fe cation is bound by residues His184, Asp186, and His239.

It belongs to the alkB family. As to quaternary structure, interacts with top-2; the interaction is required for localization of top-2 to DNA. Also interacts with mtss-1, his-24, ule-3, C18B2.3, pgl-1, ceh-93, mcm-4 and F37C4.5. The cofactor is Fe(2+).

Its subcellular location is the nucleus. It catalyses the reaction an N(6)-methyl-2'-deoxyadenosine in DNA + 2-oxoglutarate + O2 = a 2'-deoxyadenosine in DNA + formaldehyde + succinate + CO2. In terms of biological role, dioxygenase that specifically demethylates DNA methylated on the 6th position of adenine (N(6)-methyladenosine) DNA. N(6)-methyladenosine (m6A) DNA is involved in epigenetic transgenerational inheritance. Plays an essential role in DNA replication and repair in the germline during meiosis. Binds to components of the DNA replication machinery such as top-2, and directs their localization to DNA to control DNA replication. In Caenorhabditis elegans, this protein is DNA N6-methyl adenine demethylase.